A 751-amino-acid chain; its full sequence is MWKLLPAAGAAPGEPYRLLAGVEYVVGRKNCGILIENDQSISRNHAVLTVNFPVTSLSQTDEIPTLTIKDNSKYGTFVNEEKMQTGLSCTLKTGDRVTFGVFESKFRVEYEPLVVCSSCLDVSGKTVLNQAILQLGGLTANNWTEECTHLVMSAVKVTIKTICALICGRPIIKPEYFSEFLKAVESKKQPPDIESFYPPIDEPAIGSKSVDLSGRHERKQIFKGKTFVFLNAKQHKKLSSAVAFGGGEARLMAEDDEEEQSFFSAPGTCVVDVGITNTQLIISHSQKKWIHLIMDTLQRNGLRPIPEAEIGLAVIFMTTENYCNPQGQPCTELKTTTPGPSLSQVLSANGKIIPSAPVNMTTYVADTESEPADTCMPLSERPEEVKIPGLEQSSRKLSQETFNIKEAPKPSSKANNVASDTLVRGKTPSYQLSPMKFPVANKNKDWTSQQQQNSIKNYFQPCTRKRERDEDNPELSSCKSSRMELSCSLLEQTQPAGPSLWKSKEHQSQNATLDREADTSSVGGMDIELNRKSPDRKPLPTETLRPRKRKDVDLATEEEVLEELLRSTKPELAVQVKVEKQEADDTIRKKPRMDAERNRPLNGGSEPESNSALQEDEREKKDELQTESWSTKHEIANSDGLQDSSEELPRKLLLTEFRSLVVSNHNSTSRNLCVNECGPLKNFKKFKKATFPGAGKLPHIIGGSDLVGHHARKNTELEEWLKQEMEVQKQQAKEESLADDLFRYNPNVKRR.

Positions 24–83 (YVVGRKNCGILIENDQSISRNHAVLTVNFPVTSLSQTDEIPTLTIKDNSKYGTFVNEEKM) constitute an FHA domain. BRCT domains follow at residues 105 to 181 (KFRV…SEFL) and 224 to 315 (GKTF…LAVI). Residues 111 to 328 (EPLVVCSSCL…TENYCNPQGQ (218 aa)) are mediates interaction with SP100. The tract at residues 221 to 403 (IFKGKTFVFL…SRKLSQETFN (183 aa)) is interaction with MTOR, MAPKAP1 and RICTOR. Residue threonine 337 is modified to Phosphothreonine. The residue at position 343 (serine 343) is a Phosphoserine; by ATM. Residues serine 347 and serine 398 each carry the phosphoserine modification. Residues 389–418 (GLEQSSRKLSQETFNIKEAPKPSSKANNVA) are disordered. Phosphoserine; by CDK2 is present on serine 433. Lysine 436 is covalently cross-linked (Glycyl lysine isopeptide (Lys-Gly) (interchain with G-Cter in ubiquitin)). 2 disordered regions span residues 444–479 (KDWT…SSCK) and 491–550 (EQTQ…RKRK). A compositionally biased stretch (polar residues) spans 446–457 (WTSQQQQNSIKN). The Nuclear localization signal motif lies at 461 to 467 (PCTRKRE). Basic and acidic residues-rich tracts occupy residues 502-518 (KSKE…READ) and 528-539 (ELNRKSPDRKPL). Serine 508 carries the post-translational modification Phosphoserine. Residues lysine 569 and lysine 580 each participate in a glycyl lysine isopeptide (Lys-Gly) (interchain with G-Cter in SUMO2) cross-link. Residues 576-645 (VKVEKQEADD…ANSDGLQDSS (70 aa)) are disordered. 2 stretches are compositionally biased toward basic and acidic residues: residues 577–599 (KVEK…ERNR) and 615–636 (EDER…HEIA). Glycyl lysine isopeptide (Lys-Gly) (interchain with G-Cter in ubiquitin) cross-links involve residues lysine 684, lysine 688, and lysine 733. Over residues 731–742 (QAKEESLADDLF) the composition is skewed to basic and acidic residues. The segment at 731-751 (QAKEESLADDLFRYNPNVKRR) is disordered. The FxF/Y motif motif lies at 738 to 747 (ADDLFRYNPN).

Belongs to the Nibrin family. As to quaternary structure, component of the MRN complex composed of two heterodimers RAD50 and MRE11 associated with a single NBN. The MRN complexes dimerize on DNA to form joined MRN-MRN oligomers required for DNA double-strand break repair. As part of the MRN complex, interacts with MCM9; the interaction recruits the complex to DNA repair sites. Component of the BASC complex, at least composed of BRCA1, MSH2, MSH6, MLH1, ATM, BLM, RAD50, MRE11 and NBN. Interacts with histone H2AX; this requires phosphorylation of H2AX on 'Ser-139' and promotes NBN recruitment to DNA damage sites. Interacts with (phosphorylated) MDC1; promoting NBN recruitment to DNA damage sites. Interacts with (phosphorylated) RAD17; promoting NBN recruitment to DNA damage sites. Interacts (via FxF/Y motif) with ATM. Interacts with HJURP. Interacts with INTS3. Interacts with KPNA2. Interacts with TERF2; interaction is disrupted upon NBN phosphorylation by CDK2. Interacts with (phosphorylated) RBBP8/CtIP; the interaction links the role of the MRN complex in DNA double-strand break sensing to resection. Interacts with SP100; recruits NBN to PML bodies. Interacts with ATF2. Interacts with MTOR, MAPKAP1 isoform 2 and RICTOR; indicative for an association with the mTORC2 complex. Interacts with MRNIP. Interacts with UFL1; promoting UFL1 recruitment to double-strand breaks following DNA damage. Interacts with CYREN (via XLF motif). In terms of processing, ubiquitinated at Lys-436 via 'Lys-6'-linked ubiquitin chains by RNF8, promoting NBN recruitment to DNA double-strand breaks (DSBs). Ubiquitinated at Lys-684 and Lys-688 via 'Lys-63'-linked ubiquitin chains by PELI1: ubiquitination takes place following PELI1 phosphorylation and promotes ATM activation and DNA repair. Ubiquitinated at Lys-733 via 'Lys-63'-linked ubiquitin chains by the SCF(SKP2) complex: ubiquitination takes place following SKP2 phosphorylation and promotes ATM activation and DNA repair. Post-translationally, phosphorylated by ATM in response of ionizing radiation, and such phosphorylation is responsible intra-S phase checkpoint control and telomere maintenance. Phosphorylated at Ser-433 by CDK2 in S/G2 phases abolishes interaction with TERF2, enabling DCLRE1B/Apollo recruitment to telomeres. Phosphorylation at Ser-433 in response to dysfunctional telomeres promotes non-homologous end joining repair at telomeres, while dephosphorylation by PPP1CA promotes microhomology-mediated end-joining (MMEJ) repair. High expression in the liver, heart and testis. Low expression in all other tissues analyzed. In the cerebellum the postmitotic Purkinje cells are marked specifically.

It localises to the nucleus. It is found in the chromosome. The protein resides in the PML body. Its subcellular location is the telomere. In terms of biological role, component of the MRN complex, which plays a central role in double-strand break (DSB) repair, DNA recombination, maintenance of telomere integrity and meiosis. The MRN complex is involved in the repair of DNA double-strand breaks (DSBs) via homologous recombination (HR), an error-free mechanism which primarily occurs during S and G2 phases. The complex (1) mediates the end resection of damaged DNA, which generates proper single-stranded DNA, a key initial steps in HR, and is (2) required for the recruitment of other repair factors and efficient activation of ATM and ATR upon DNA damage. The MRN complex possesses single-strand endonuclease activity and double-strand-specific 3'-5' exonuclease activity, which are provided by MRE11, to initiate end resection, which is required for single-strand invasion and recombination. Within the MRN complex, NBN acts as a protein-protein adapter, which specifically recognizes and binds phosphorylated proteins, promoting their recruitment to DNA damage sites. Recruits MRE11 and RAD50 components of the MRN complex to DSBs in response to DNA damage. Promotes the recruitment of PI3/PI4-kinase family members ATM, ATR, and probably DNA-PKcs to the DNA damage sites, activating their functions. Mediates the recruitment of phosphorylated RBBP8/CtIP to DSBs, leading to cooperation between the MRN complex and RBBP8/CtIP to initiate end resection. RBBP8/CtIP specifically promotes the endonuclease activity of the MRN complex to clear DNA ends containing protein adducts. The MRN complex is also required for the processing of R-loops. NBN also functions in telomere length maintenance via its interaction with TERF2: interaction with TERF2 during G1 phase preventing recruitment of DCLRE1B/Apollo to telomeres. NBN also promotes DNA repair choice at dysfunctional telomeres: NBN phosphorylation by CDK2 promotes non-homologous end joining repair at telomeres, while unphosphorylated NBN promotes microhomology-mediated end-joining (MMEJ) repair. Enhances AKT1 phosphorylation possibly by association with the mTORC2 complex. This Mus musculus (Mouse) protein is Nibrin.